A 653-amino-acid chain; its full sequence is MDSDMEISLDRLPIKRLESIEENGAERFPSDVDYDDKRVSLIRRIDFAWALEEEDELKKKKQKKSSKDSVEQWKWKGMVENLQLAHQELTVIIDLIDTVQANDAVTVAGMTRPKPMPNEILSDLAVSTATKLQGYRNLGNYFKQSAKALEQKINREARFYGALIRLQRNWKVKRQRMLASNASNEGFTIDLSDSSLYDPTSGFRPSTLSTIRVDHDSAGMLAINVPQDSWYSLRFGYVGLNPIGNSNESDEHIDSTTGHDIPGTSEKLSASDDKYVKETHSLLREVHKSIFAEQLFDMLNREAFNEGVGFNISGLRENFMEMSIGQGASLFVSLHPSGKNPSIKKSESATLLIESSGRVEPAEGGDYRLKKLGFPNRTSYEIYLQQIFHEHAFGKAKDQLKSKSIRASNQTEKDSNSGLLDHFCLSLTHRIFSNRVLVHLESVVCKVPYLHLISHPTWNSRTSSWTVFMTVPPSIIPQGRSETQSPDGKRNLKTQFRTKVVVKDDCISVEAECTPNVVGLLKSSSCNLFSINKYECDVADLPVMILQQVASQIVCWLLEEARTVGTKASREFLSLSLEIVEGERVSLVAHVNPEDAKGCISWWLVMENGCTEEREGVSESRKLLGHLSLDVLYSVLMDLINLCGTGRNALERL.

The segment at 246-271 (SNESDEHIDSTTGHDIPGTSEKLSAS) is disordered.

The protein belongs to the Mediator complex subunit 17 family. Component of the Mediator complex.

It localises to the nucleus. Its function is as follows. Component of the Mediator complex, a coactivator involved in the regulated transcription of nearly all RNA polymerase II-dependent genes. Mediator functions as a bridge to convey information from gene-specific regulatory proteins to the basal RNA polymerase II transcription machinery. The Mediator complex, having a compact conformation in its free form, is recruited to promoters by direct interactions with regulatory proteins and serves for the assembly of a functional preinitiation complex with RNA polymerase II and the general transcription factors. The chain is Mediator of RNA polymerase II transcription subunit 17 (MED17) from Arabidopsis thaliana (Mouse-ear cress).